The primary structure comprises 599 residues: Aspartate--tRNA ligase (599 aa).

An L-aspartate-binding site is contributed by glutamate 180. Residues 204 to 207 form an aspartate region; it reads QIFK. Residue arginine 226 coordinates L-aspartate. ATP contacts are provided by residues 226–228 and glutamine 235; that span reads RDE. Histidine 454 provides a ligand contact to L-aspartate. Glutamate 488 lines the ATP pocket. Arginine 495 contacts L-aspartate. 540 to 543 provides a ligand contact to ATP; that stretch reads GLDR.

This sequence belongs to the class-II aminoacyl-tRNA synthetase family. Type 1 subfamily. Homodimer.

It is found in the cytoplasm. It carries out the reaction tRNA(Asp) + L-aspartate + ATP = L-aspartyl-tRNA(Asp) + AMP + diphosphate. Catalyzes the attachment of L-aspartate to tRNA(Asp) in a two-step reaction: L-aspartate is first activated by ATP to form Asp-AMP and then transferred to the acceptor end of tRNA(Asp). The chain is Aspartate--tRNA ligase from Clostridium botulinum (strain Eklund 17B / Type B).